A 137-amino-acid chain; its full sequence is Cellular retinoic acid-binding protein 1 (137 aa).

The Nuclear localization signal motif lies at 21–31 (RALGVNAMLRK). Residue 132–134 (RIY) participates in all-trans-retinoate binding.

Belongs to the calycin superfamily. Fatty-acid binding protein (FABP) family.

It is found in the cytoplasm. Its function is as follows. Cytosolic CRABPs may regulate the access of retinoic acid to the nuclear retinoic acid receptors. In Pelodiscus sinensis (Chinese softshell turtle), this protein is Cellular retinoic acid-binding protein 1 (CRABP1).